The primary structure comprises 136 residues: Large-conductance mechanosensitive channel (136 aa).

Transmembrane regions (helical) follow at residues 9-29 (AFASRGNVIDMAVGIIIGAAF) and 79-99 (IQTVIDFTIIAFAIFMGLKAI).

Belongs to the MscL family. In terms of assembly, homopentamer.

Its subcellular location is the cell inner membrane. In terms of biological role, channel that opens in response to stretch forces in the membrane lipid bilayer. May participate in the regulation of osmotic pressure changes within the cell. The protein is Large-conductance mechanosensitive channel of Shewanella sp. (strain W3-18-1).